The primary structure comprises 93 residues: Phosphoribosyl-ATP pyrophosphatase (93 aa).

It belongs to the PRA-PH family.

The protein localises to the cytoplasm. It catalyses the reaction 1-(5-phospho-beta-D-ribosyl)-ATP + H2O = 1-(5-phospho-beta-D-ribosyl)-5'-AMP + diphosphate + H(+). Its pathway is amino-acid biosynthesis; L-histidine biosynthesis; L-histidine from 5-phospho-alpha-D-ribose 1-diphosphate: step 2/9. The chain is Phosphoribosyl-ATP pyrophosphatase from Metallosphaera sedula (strain ATCC 51363 / DSM 5348 / JCM 9185 / NBRC 15509 / TH2).